Reading from the N-terminus, the 204-residue chain is Leucyl/phenylalanyl-tRNA--protein transferase (204 aa).

It belongs to the L/F-transferase family.

Its subcellular location is the cytoplasm. The enzyme catalyses N-terminal L-lysyl-[protein] + L-leucyl-tRNA(Leu) = N-terminal L-leucyl-L-lysyl-[protein] + tRNA(Leu) + H(+). It carries out the reaction N-terminal L-arginyl-[protein] + L-leucyl-tRNA(Leu) = N-terminal L-leucyl-L-arginyl-[protein] + tRNA(Leu) + H(+). The catalysed reaction is L-phenylalanyl-tRNA(Phe) + an N-terminal L-alpha-aminoacyl-[protein] = an N-terminal L-phenylalanyl-L-alpha-aminoacyl-[protein] + tRNA(Phe). Its function is as follows. Functions in the N-end rule pathway of protein degradation where it conjugates Leu, Phe and, less efficiently, Met from aminoacyl-tRNAs to the N-termini of proteins containing an N-terminal arginine or lysine. The sequence is that of Leucyl/phenylalanyl-tRNA--protein transferase from Sinorhizobium medicae (strain WSM419) (Ensifer medicae).